Reading from the N-terminus, the 373-residue chain is Mitochondrial fission regulator 2 (373 aa).

Position 136 is a phosphoserine (Ser136). The stretch at Val151–Met179 forms a coiled coil. 2 disordered regions span residues Gly189–Val331 and Asp346–Phe373. A compositionally biased stretch (pro residues) spans Ser224–Gln239. Composition is skewed to basic and acidic residues over residues Lys275–Arg287 and Val297–Glu310. Residues Ser312 and Ser348 each carry the phosphoserine modification. Positions Arg354–Phe373 are enriched in polar residues.

Belongs to the MTFR1 family.

The protein localises to the mitochondrion. Functionally, may play a role in mitochondrial aerobic respiration essentially in the testis. Can also promote mitochondrial fission. This Rattus norvegicus (Rat) protein is Mitochondrial fission regulator 2 (Mtfr2).